The sequence spans 192 residues: Large ribosomal subunit protein uL5 (192 aa).

It belongs to the universal ribosomal protein uL5 family. In terms of assembly, part of the 50S ribosomal subunit; part of the 5S rRNA/L5/L18/L25 subcomplex. Contacts the 5S rRNA and the P site tRNA. Forms a bridge to the 30S subunit in the 70S ribosome.

Functionally, this is one of the proteins that bind and probably mediate the attachment of the 5S RNA into the large ribosomal subunit, where it forms part of the central protuberance. In the 70S ribosome it contacts protein S13 of the 30S subunit (bridge B1b), connecting the 2 subunits; this bridge is implicated in subunit movement. Contacts the P site tRNA; the 5S rRNA and some of its associated proteins might help stabilize positioning of ribosome-bound tRNAs. The polypeptide is Large ribosomal subunit protein uL5 (Zymomonas mobilis subsp. mobilis (strain ATCC 31821 / ZM4 / CP4)).